A 267-amino-acid chain; its full sequence is NAD kinase 2 (267 aa).

Aspartate 52 (proton acceptor) is an active-site residue. Residues 52-53, 124-125, arginine 151, aspartate 153, 164-169, and alanine 188 each bind NAD(+); these read DA, NE, and TAYNKS.

Belongs to the NAD kinase family. A divalent metal cation serves as cofactor.

The protein resides in the cytoplasm. The catalysed reaction is NAD(+) + ATP = ADP + NADP(+) + H(+). Functionally, involved in the regulation of the intracellular balance of NAD and NADP, and is a key enzyme in the biosynthesis of NADP. Catalyzes specifically the phosphorylation on 2'-hydroxyl of the adenosine moiety of NAD to yield NADP. The protein is NAD kinase 2 of Bacillus anthracis.